Here is a 319-residue protein sequence, read N- to C-terminus: Thioredoxin reductase (319 aa).

Residues 11 to 14 (SGPA), 40 to 41 (IA), Q45, N54, V87, C145, D288, and 295 to 297 (RQA) each bind FAD. A disulfide bridge links C142 with C145.

It belongs to the class-II pyridine nucleotide-disulfide oxidoreductase family. As to quaternary structure, homodimer. It depends on FAD as a cofactor.

It localises to the cytoplasm. It catalyses the reaction [thioredoxin]-dithiol + NADP(+) = [thioredoxin]-disulfide + NADPH + H(+). This Yarrowia lipolytica (strain CLIB 122 / E 150) (Yeast) protein is Thioredoxin reductase (TRR1).